The following is a 163-amino-acid chain: Nucleotide-binding protein GWCH70_0711 (163 aa).

Belongs to the YajQ family.

In terms of biological role, nucleotide-binding protein. The polypeptide is Nucleotide-binding protein GWCH70_0711 (Geobacillus sp. (strain WCH70)).